A 406-amino-acid chain; its full sequence is Vacuole membrane protein 1 (406 aa).

Residues 1-20 (MAENGKNCDQRRIAMSKDQH) show a composition bias toward basic and acidic residues. Residues 1–37 (MAENGKNCDQRRIAMSKDQHNGSLTDPSSVHEKKRRD) are disordered. Ala2 carries the post-translational modification N-acetylalanine. Over 2–77 (AENGKNCDQR…WTSKLWHRQS (76 aa)) the chain is Cytoplasmic. The helical transmembrane segment at 78–98 (IVVSFLLLLAALVATYYVEGA) threads the bilayer. The Extracellular segment spans residues 99-109 (HQQYVQRIEKQ). Residues 110 to 130 (FLLYAYWIGLGILSSVGLGTG) form a helical membrane-spanning segment. Over 131 to 250 (LHTFLLYLGP…ASRAKLAVQK (120 aa)) the chain is Cytoplasmic. Positions 173–316 (GAEGAISLWS…FVIVTFSKHI (144 aa)) are VTT domain. Residues 251 to 271 (LVQKVGFFGILACASIPNPLF) form a helical membrane-spanning segment. At 272 to 273 (DL) the chain is on the extracellular side. Residues 274-294 (AGITCGHFLVPFWTFFGATLI) form a helical membrane-spanning segment. Over 295–305 (GKAIIKMHIQK) the chain is Cytoplasmic. The chain crosses the membrane as a helical span at residues 306–326 (IFVIVTFSKHIVEQMVTFIGA). Over 327 to 363 (VPGIGPSLQKPFQEYLEAQRQKLHHRSEAGTPQGENW) the chain is Extracellular. A helical membrane pass occupies residues 364 to 384 (LSWMFEKLVVAMVCYFVLSII). The Cytoplasmic segment spans residues 385–406 (NSMAQNYAKRIQQRLNSEEKTK).

The protein belongs to the VMP1 family. Interacts with BECN1. Interacts with TJP1. Interacts with TP53INP2. Interacts with TMEM41B. Interacts with ATP2A2, PLN and SLN; competes with PLN and SLN to prevent them from forming an inhibitory complex with ATP2A2. Interacts with ATG2A.

It is found in the endoplasmic reticulum-Golgi intermediate compartment membrane. The protein resides in the cell membrane. Its subcellular location is the vacuole membrane. It localises to the endoplasmic reticulum membrane. The enzyme catalyses a 1,2-diacyl-sn-glycero-3-phospho-L-serine(in) = a 1,2-diacyl-sn-glycero-3-phospho-L-serine(out). It carries out the reaction cholesterol(in) = cholesterol(out). The catalysed reaction is a 1,2-diacyl-sn-glycero-3-phosphocholine(in) = a 1,2-diacyl-sn-glycero-3-phosphocholine(out). It catalyses the reaction a 1,2-diacyl-sn-glycero-3-phosphoethanolamine(in) = a 1,2-diacyl-sn-glycero-3-phosphoethanolamine(out). Functionally, phospholipid scramblase involved in lipid homeostasis and membrane dynamics processes. Has phospholipid scramblase activity toward cholesterol and phosphatidylserine, as well as phosphatidylethanolamine and phosphatidylcholine. Required for autophagosome formation: participates in early stages of autophagosome biogenesis at the endoplasmic reticulum (ER) membrane by reequilibrating the leaflets of the ER as lipids are extracted by ATG2 (ATG2A or ATG2B) to mediate autophagosome assembly. Regulates ATP2A2 activity to control ER-isolation membrane contacts for autophagosome formation. In addition to autophagy, involved in other processes in which phospholipid scramblase activity is required. Modulates ER contacts with lipid droplets, mitochondria and endosomes. Plays an essential role in formation of cell junctions. Upon stress such as bacterial and viral infection, promotes formation of cytoplasmic vacuoles followed by cell death. Involved in the cytoplasmic vacuolization of acinar cells during the early stage of acute pancreatitis. The sequence is that of Vacuole membrane protein 1 from Mus musculus (Mouse).